The following is a 490-amino-acid chain: Lipoprotein lipase (490 aa).

The signal sequence occupies residues 1–25; the sequence is MERGRGMGKTALLAVLCLCLRGAAG. Residues 32–53 are interaction with GPIHBP1; it reads MNFEGIESKFSLRTPAEPDEDV. The cysteines at positions 54 and 67 are disulfide-linked. N70 carries N-linked (GlcNAc...) (complex) asparagine glycosylation. Y121 is modified (3'-nitrotyrosine). The active-site Nucleophile is the S159. The active-site Charge relay system is D183. Y191 is modified (3'-nitrotyrosine). Ca(2+)-binding residues include A194, R197, S199, and D202. Cysteines 243 and 266 form a disulfide. The interval 243-266 is essential for determining substrate specificity; it reads CNLGEALRLIAEKGFSDVDQLVKC. H268 functions as the Charge relay system in the catalytic mechanism. 2 disulfides stabilise this stretch: C291-C310 and C302-C305. The region spanning 341 to 464 is the PLAT domain; sequence FHYQVKIHFF…KGEEAAIFVK (124 aa). A 3'-nitrotyrosine modification is found at Y343. N354 and N386 each carry an N-linked (GlcNAc...) asparagine glycan. Residues 417 to 421 form an important for interaction with lipoprotein particles region; sequence WSDWW. Residues 430–434 form an important for heparin binding region; sequence RVRVK. 430–441 contacts heparin; it reads RVRVKSGETQKK. The tract at residues 443-467 is interaction with GPIHBP1; it reads VFCSRDGSSRLGKGEEAAIFVKCLE. An intrachain disulfide couples C445 to C465. The segment at 471–490 is disordered; sequence SRKRGGAKKASKENSAHESA. Positions 480-490 are enriched in basic and acidic residues; sequence ASKENSAHESA.

This sequence belongs to the AB hydrolase superfamily. Lipase family. As to quaternary structure, homodimer. Interacts with GPIHBP1 with 1:1 stoichiometry. Interacts with APOC2; the interaction activates LPL activity in the presence of lipids. Interaction with heparan sulfate proteoglycans is required to protect LPL against loss of activity. Associates with lipoprotein particles in blood plasma. Interacts with LMF1 and SEL1L; interaction with SEL1L is required to prevent aggregation of newly synthesized LPL in the endoplasmic reticulum (ER), and for normal export of LPL from the ER to the extracellular space. In terms of processing, N-glycan at Asn-70 is a triantennary complex oligosaccharide containing sialic acid, galactose, mannose, and N-acetylglucosamine, the reducing GlcNAc being sulfated at C6. Post-translationally, tyrosine nitration after lipopolysaccharide (LPS) challenge down-regulates the lipase activity.

It localises to the cell membrane. It is found in the secreted. Its subcellular location is the extracellular space. The protein resides in the extracellular matrix. The enzyme catalyses a triacylglycerol + H2O = a diacylglycerol + a fatty acid + H(+). The catalysed reaction is a 1,2-diacyl-sn-glycero-3-phosphocholine + H2O = a 2-acyl-sn-glycero-3-phosphocholine + a fatty acid + H(+). It catalyses the reaction 1,2,3-tri-(9Z-octadecenoyl)-glycerol + H2O = di-(9Z)-octadecenoylglycerol + (9Z)-octadecenoate + H(+). It carries out the reaction 1,2-di-(9Z-octadecenoyl)-sn-glycero-3-phosphocholine + H2O = (9Z-octadecenoyl)-sn-glycero-3-phosphocholine + (9Z)-octadecenoate + H(+). The enzyme catalyses 1,2,3-tributanoylglycerol + H2O = dibutanoylglycerol + butanoate + H(+). The catalysed reaction is 1,2-dihexadecanoyl-sn-glycero-3-phosphocholine + H2O = hexadecanoyl-sn-glycero-3-phosphocholine + hexadecanoate + H(+). Its activity is regulated as follows. Ca(2+) binding promotes protein stability and formation of the active homodimer. Key enzyme in triglyceride metabolism. Catalyzes the hydrolysis of triglycerides from circulating chylomicrons and very low density lipoproteins (VLDL), and thereby plays an important role in lipid clearance from the blood stream, lipid utilization and storage. Although it has both phospholipase and triglyceride lipase activities it is primarily a triglyceride lipase with low but detectable phospholipase activity. Mediates margination of triglyceride-rich lipoprotein particles in capillaries. Recruited to its site of action on the luminal surface of vascular endothelium by binding to GPIHBP1 and cell surface heparan sulfate proteoglycans. This chain is Lipoprotein lipase (LPL), found in Gallus gallus (Chicken).